Consider the following 1115-residue polypeptide: MNNWQHFFNNPVDLSEHLKKPYFRFDNRDKEITAISFDEKANLIWSGDSYGCISSYDPTFQLYTRYRGHIGGNSVKDILSHRDGILSISEDSLHFANRRGVTKLNLTSIDIAAFSELNTMCYSPHSLKNNIYCGGDNTNWGIASIDLNRGCLDSLLNYSSKVKLMCSNNKVLSIGRQTGTVDLLDPTSNRTIKSFNAHSASISAMDLRDNTLVTVGKSKRFYNLYADPFVNVYDLRTMRQLPPVSFSKGTTMGSGGADFVQLHPLLPTVMIVASSSGSFDFIDLSNPTLRTQYVHPCQSIKKLCLSPNGDVLGILEADNHLDTWRRSSNNMGMFTNTPEMLAYPDYFNDITSDGPISVDDETYPLSSVGMPYYLDKLLSAWPPVVFKSEGTIPQLTGKSPLPSSGKLKSNLAVISSQNEKLSTQEFPLLRYDRTKYGMRNAIPDYVCLRDIRKQITSGLETSDIQTYTSINKYEVPPAYSRLPLTSGRFGTDNFDFTPFNNTEYSGLDPDVDNHYTNAIIQLYRFIPEMFNFVVGCLKDENFETTLLTDLGYLFDMMERSHGKICSSSNFQASLKSLTDKRQLENGEPQEHLEEYLESLCIRESIEDFNSSESIKRNMPQKFNRFLLSQLIKEEAQTVNHNITLNQCFGLETEIRTECSCDHYDTTVKLLPSLSISGINKTVIKQLNKKSNGQNILPYIEYAMKNVTQKNSICPTCGKTETITQECTVKNLPSVLSLELSLLDTEFSNIRSSKNWLTSEFYGSIIKNKAVLRSTASELKGTSHIFKYELNGYVAKITDNNNETRLVTYVKKYNPKENCFKWLMFNDYLVVEITEEEALKMTYPWKTPEIIIYCDAEELRKPFFSVDTYSINYDILFRDYFANGIRDTARREYKLLTHDEAPKSGTLVAIDAEFVSLQSELCEIDHQGIRSIIRPKRTALARISIIRGEEGELYGVPFVDDYVVNTNHIEDYLTRYSGILPGDLDPEKSTKRLVRRNVVYRKVWLLMQLGCVFVGHGLNNDFKHININVPRNQIRDTAIYFLQGKRYLSLRYLAYVLLGMNIQEGNHDSIEDAHTALILYKKYLHLKEKAIFEKVLNSVYEEGRAHNFKVPETSKG.

5 WD repeats span residues 27 to 66, 112 to 153, 155 to 194, 197 to 236, and 295 to 334; these read NRDK…YTRY, AAFS…GCLD, LLNY…TIKS, AHSA…YDLR, and HPCQ…MGMF. Positions 337–473 are linker; sequence TPEMLAYPDY…IQTYTSINKY (137 aa). Residues 474–855 form the USP domain; it reads EVPPAYSRLP…TPEIIIYCDA (382 aa). Zn(2+)-binding residues include Cys-660, His-662, Cys-713, and Cys-716. The 173-residue stretch at 907-1079 folds into the Exonuclease domain; the sequence is VAIDAEFVSL…EDAHTALILY (173 aa). 4 residues coordinate a divalent metal cation: Asp-910, Glu-912, Asp-1020, and Asp-1071.

Belongs to the peptidase C19 family. PAN2 subfamily. In terms of assembly, forms a heterotrimer with an asymmetric homodimer of the regulatory subunit PAN3 to form the poly(A)-nuclease (PAN) deadenylation complex. The cofactor is a divalent metal cation.

It is found in the cytoplasm. It catalyses the reaction Exonucleolytic cleavage of poly(A) to 5'-AMP.. Its activity is regulated as follows. Positively regulated by the regulatory subunit PAN3. Negatively regulated by PAB1-binding protein PBP1. Inhibited under stress conditions. Inhibition of deadenylation under stress increases mRNA stability, which may be a mechanism to retain the majority of the cytoplasmic pool of mRNAs for later reuse and recovery from stress. Catalytic subunit of the poly(A)-nuclease (PAN) deadenylation complex, one of two cytoplasmic mRNA deadenylases involved in mRNA turnover. PAN specifically shortens poly(A) tails of RNA and the activity is stimulated by poly(A)-binding protein PAB1. PAN deadenylation is followed by rapid degradation of the shortened mRNA tails by the CCR4-NOT complex. Deadenylated mRNAs are then degraded by two alternative mechanisms, namely exosome-mediated 3'-5' exonucleolytic degradation, or deadenylation-dependent mRNA decaping by DCP1-DCP2 and subsequent 5'-3' exonucleolytic degradation by XRN1. May also be involved in post-transcriptional maturation of mRNA poly(A) tails, trimming the tails from their synthesized length to the slightly shorter, apparently messenger-specific length found on newly exported mRNAs. PAN cooperates with protein kinase DUN1 in the regulation of RAD5 mRNA levels and cell survival in response to replicational stress. The protein is PAN2-PAN3 deadenylation complex catalytic subunit PAN2 of Saccharomyces cerevisiae (strain ATCC 204508 / S288c) (Baker's yeast).